The chain runs to 88 residues: Small ribosomal subunit protein uS15 (88 aa).

The protein belongs to the universal ribosomal protein uS15 family. In terms of assembly, part of the 30S ribosomal subunit. Forms a bridge to the 50S subunit in the 70S ribosome, contacting the 23S rRNA.

Its function is as follows. One of the primary rRNA binding proteins, it binds directly to 16S rRNA where it helps nucleate assembly of the platform of the 30S subunit by binding and bridging several RNA helices of the 16S rRNA. Forms an intersubunit bridge (bridge B4) with the 23S rRNA of the 50S subunit in the ribosome. The sequence is that of Small ribosomal subunit protein uS15 from Methylacidiphilum infernorum (isolate V4) (Methylokorus infernorum (strain V4)).